Here is a 259-residue protein sequence, read N- to C-terminus: Activator of lactoyl-CoA dehydratase (259 aa).

Cysteine 125 and cysteine 164 together coordinate [4Fe-4S] cluster.

As to quaternary structure, homodimer. It depends on [4Fe-4S] cluster as a cofactor.

Its function is as follows. Required for the activation of lactoyl-CoA dehydratase. This protein is extremely sensitive towards oxygen. This is Activator of lactoyl-CoA dehydratase (lcdC) from Anaerotignum propionicum (Clostridium propionicum).